The sequence spans 380 residues: Transcription factor RF2a (380 aa).

The tract at residues 1–57 is disordered; sequence MNREKSPIPGDGGDGLPPQATRRAGPPAAAAAAEYDISRMPDFPTRNPGHRRAHSEI. Low complexity predominate over residues 16-33; the sequence is LPPQATRRAGPPAAAAAA. Positions 56 to 108 are activation of RTBV promoter; that stretch reads EILSLPEDLDLCAAGGGDGPSLSDENDEELFSMFLDVEKLNSTCGASSEAEAE. The region spanning 181 to 244 is the bZIP domain; it reads DPKRAKRIWA…SGLTTENSEL (64 aa). The interval 183–204 is basic motif; that stretch reads KRAKRIWANRQSAARSKERKMR. The tract at residues 209–244 is leucine-zipper; it reads LERKVQTLQTEATTLSAQLALLQRDTSGLTTENSEL. An interaction with TBP2 region spans residues 283–357; the sequence is GGMMMNFGGM…AQQLQQAARD (75 aa). Low complexity predominate over residues 326–355; the sequence is QAQQQQVLHPQHQQQQPLHPLQAQQLQQAA. A disordered region spans residues 326-380; the sequence is QAQQQQVLHPQHQQQQPLHPLQAQQLQQAARDLKMKSPMGGQSQWGDGKSGSSGN.

This sequence belongs to the bZIP family. Binds DNA as a homodimer or as a heterodimer with RF2b. The heterodimer binds stronger to DNA than the homodimer. Interacts with TBP2. As to expression, expressed at high levels in levels in leaf sheath, moderate levels in leaf blade, but not in roots. Predominantly expressed in vascular tissues.

Its subcellular location is the nucleus. In terms of biological role, transcription factor probably involved in vascular development and shoot tissue organization. Binds to the DNA sequence 5'-CCGAGTGTGCCCCTGG-3' present in the promoter region Box II of the phloem-specific rice tungro bacilliform virus (RTBV) promoter. May regulate tissue-specific expression of the RTBV promoter and virus replication. This Oryza sativa subsp. japonica (Rice) protein is Transcription factor RF2a (RF2a).